The chain runs to 247 residues: Osmotin-like protein OSML81 (247 aa).

The N-terminal stretch at 1 to 21 is a signal peptide; sequence MGYLRSSFIFSLLAFVTYTYA. Disulfide bonds link Cys30/Cys225, Cys72/Cys82, Cys87/Cys93, Cys141/Cys213, Cys146/Cys196, Cys154/Cys164, Cys168/Cys177, and Cys178/Cys183.

This sequence belongs to the thaumatin family.

This chain is Osmotin-like protein OSML81, found in Solanum commersonii (Commerson's wild potato).